A 644-amino-acid polypeptide reads, in one-letter code: Threonine--tRNA ligase (644 aa).

The TGS domain occupies 1–62 (MSFSVTLPDG…DSDVEIAIIT (62 aa)). The tract at residues 240 to 538 (DHRTIGRDLD…LTEIYKGAFP (299 aa)) is catalytic. Zn(2+)-binding residues include C334, H385, and H515.

Belongs to the class-II aminoacyl-tRNA synthetase family. As to quaternary structure, homodimer. Zn(2+) is required as a cofactor.

Its subcellular location is the cytoplasm. It carries out the reaction tRNA(Thr) + L-threonine + ATP = L-threonyl-tRNA(Thr) + AMP + diphosphate + H(+). Functionally, catalyzes the attachment of threonine to tRNA(Thr) in a two-step reaction: L-threonine is first activated by ATP to form Thr-AMP and then transferred to the acceptor end of tRNA(Thr). Also edits incorrectly charged L-seryl-tRNA(Thr). In Lactobacillus acidophilus (strain ATCC 700396 / NCK56 / N2 / NCFM), this protein is Threonine--tRNA ligase.